The following is a 202-amino-acid chain: uncharacterized protein (202 aa).

The GST N-terminal domain occupies methionine 1 to alanine 78. Residues serine 9, valine 49, and aspartate 62–serine 63 each bind glutathione. A GST C-terminal domain is found at aspartate 83–alanine 202.

The protein belongs to the GST superfamily. HSP26 family.

Glutathione (GSH) transferase homolog, that might be involved in selenium metabolism. This is an uncharacterized protein from Escherichia coli (strain K12).